The following is a 740-amino-acid chain: D-ornithine 4,5-aminomutase subunit beta (740 aa).

Substrate contacts are provided by residues glutamate 81, tyrosine 160, histidine 182, and 294–296; that span reads RAQ. Positions 602–739 constitute a B12-binding domain; that stretch reads PLKIVAATVG…VKKRREMREG (138 aa). Residues 614–616 and histidine 615 each bind adenosylcob(III)alamin; that span reads EHS. At lysine 626 the chain carries N6-(pyridoxal phosphate)lysine. Adenosylcob(III)alamin contacts are provided by residues 664–669, threonine 700, and serine 720; that span reads STIISH.

In terms of assembly, heterotetramer of 2 alpha (OraS) and 2 beta (OraE) subunits. The cofactor is adenosylcob(III)alamin. Pyridoxal 5'-phosphate is required as a cofactor.

The catalysed reaction is D-ornithine = (2R,4S)-2,4-diaminopentanoate. Its activity is regulated as follows. Increased activity in the presence of dithiothreitol (DTT) in vitro. Inhibited by 1 mM potassium phosphate and potassium chloride. Inhibited by L-alpha-ornithine, D,L-alpha-lysine, L-beta-lysine (50%-60%), L-alpha-lysine (26%) and by delta-amino-n-valeric acid to a lesser extent. Significant decrease in activity is observed in the presence of 0.2 mM p-chloromercuribenzoate, N-ethylmaleimide and also by 2 mM iodoacetate to a lesser extent but not inhibited by arsenite. In terms of biological role, component of a complex that catalyzes the reversible migration of the omega amino group of D-ornithine to C-4 to form (2R,4S)-2,4-diaminopentanoic acid. OraE may be the catalytic subunit. Active only on D-ornithine and 2,4-diaminopentanoic acid but not active on L-ornithine, L-beta-lysine, L-alpha-lysine or D-alpha-lysine. The chain is D-ornithine 4,5-aminomutase subunit beta (oraE) from Acetoanaerobium sticklandii (strain ATCC 12662 / DSM 519 / JCM 1433 / CCUG 9281 / NCIMB 10654 / HF) (Clostridium sticklandii).